A 599-amino-acid polypeptide reads, in one-letter code: NTPase KAP family P-loop domain-containing protein 1 (599 aa).

Residues 1-416 enclose the KAP NTPase domain; sequence MQQEAAQRES…NTVPITVRLL (416 aa). 3 helical membrane-spanning segments follow: residues 25-45, 119-139, and 156-176; these read GWGVPKLLWFLVFLQPVITEL, VCLALLALLAALCLGVGLLYL, and ALGGAATTLSGSGLLMAVYSV. The tract at residues 543–599 is disordered; it reads ALKPPSPPKSPSQDGPQASPRAIIAAGTSHAGQGSGHSKEAHQTRDRTHGGKPRPMA. The segment covering 579–591 has biased composition (basic and acidic residues); the sequence is HSKEAHQTRDRTH.

The protein localises to the membrane. The protein is NTPase KAP family P-loop domain-containing protein 1 (Nkpd1) of Mus musculus (Mouse).